We begin with the raw amino-acid sequence, 198 residues long: Pyridoxal 5'-phosphate synthase subunit PdxT (198 aa).

L-glutamine is bound at residue Gly49–Ser51. Cys81 functions as the Nucleophile in the catalytic mechanism. L-glutamine-binding positions include Arg112 and Ile140–Arg141. Catalysis depends on charge relay system residues His176 and Glu178.

Belongs to the glutaminase PdxT/SNO family. In terms of assembly, in the presence of PdxS, forms a dodecamer of heterodimers. Only shows activity in the heterodimer.

The catalysed reaction is aldehydo-D-ribose 5-phosphate + D-glyceraldehyde 3-phosphate + L-glutamine = pyridoxal 5'-phosphate + L-glutamate + phosphate + 3 H2O + H(+). It catalyses the reaction L-glutamine + H2O = L-glutamate + NH4(+). It functions in the pathway cofactor biosynthesis; pyridoxal 5'-phosphate biosynthesis. Its function is as follows. Catalyzes the hydrolysis of glutamine to glutamate and ammonia as part of the biosynthesis of pyridoxal 5'-phosphate. The resulting ammonia molecule is channeled to the active site of PdxS. This is Pyridoxal 5'-phosphate synthase subunit PdxT from Methanocella arvoryzae (strain DSM 22066 / NBRC 105507 / MRE50).